The following is a 428-amino-acid chain: Ribulose bisphosphate carboxylase (428 aa).

Residue lysine 151 is the Proton acceptor of the active site. A substrate-binding site is contributed by lysine 153. Positions 177, 179, and 180 each coordinate Mg(2+). At lysine 177 the chain carries N6-carboxylysine. Residue histidine 270 is the Proton acceptor of the active site. Substrate is bound by residues arginine 271, histidine 303, 354–356 (SGG), and 376–379 (QFGG).

Belongs to the RuBisCO large chain family. Type III subfamily. In terms of assembly, homodimer. In contrast to form I RuBisCO, the form III RuBisCO is composed solely of large subunits. It depends on Mg(2+) as a cofactor.

It catalyses the reaction 2 (2R)-3-phosphoglycerate + 2 H(+) = D-ribulose 1,5-bisphosphate + CO2 + H2O. The enzyme catalyses D-ribulose 1,5-bisphosphate + O2 = 2-phosphoglycolate + (2R)-3-phosphoglycerate + 2 H(+). Its activity is regulated as follows. Reversibly inhibited by O(2). Catalyzes the addition of molecular CO(2) and H(2)O to ribulose 1,5-bisphosphate (RuBP), generating two molecules of 3-phosphoglycerate (3-PGA). Functions in an archaeal AMP degradation pathway, together with AMP phosphorylase and R15P isomerase. The chain is Ribulose bisphosphate carboxylase from Methanosarcina acetivorans (strain ATCC 35395 / DSM 2834 / JCM 12185 / C2A).